A 510-amino-acid polypeptide reads, in one-letter code: Hepatic triacylglycerol lipase (510 aa).

Residues 1–21 (MGNPLQISIFLVFCIFIQSSA) form the signal peptide. A glycan (N-linked (GlcNAc...) asparagine) is linked at Asn-79. The active-site Nucleophile is the Ser-169. Asp-195 serves as the catalytic Charge relay system. Residues 255–278 (CHFLELYKHIAEHGLNAITQTIKC) form an essential for determining substrate specificity region. His-280 acts as the Charge relay system in catalysis. A PLAT domain is found at 353-487 (YHYQFKIQFI…HPSQEKVFVN (135 aa)). N-linked (GlcNAc...) asparagine glycosylation occurs at Asn-398.

This sequence belongs to the AB hydrolase superfamily. Lipase family. As to quaternary structure, homodimer.

The protein localises to the secreted. The enzyme catalyses a triacylglycerol + H2O = a diacylglycerol + a fatty acid + H(+). It carries out the reaction a 1-acyl-sn-glycero-3-phosphocholine + H2O = sn-glycerol 3-phosphocholine + a fatty acid + H(+). It catalyses the reaction a 1,2-diacyl-sn-glycero-3-phosphocholine + H2O = a 2-acyl-sn-glycero-3-phosphocholine + a fatty acid + H(+). The catalysed reaction is 1,2,3-tri-(9Z-octadecenoyl)-glycerol + H2O = di-(9Z)-octadecenoylglycerol + (9Z)-octadecenoate + H(+). The enzyme catalyses 1,2-di-(9Z-octadecenoyl)-sn-glycero-3-phosphocholine + H2O = (9Z-octadecenoyl)-sn-glycero-3-phosphocholine + (9Z)-octadecenoate + H(+). It carries out the reaction 1,2,3-tributanoylglycerol + H2O = dibutanoylglycerol + butanoate + H(+). It catalyses the reaction 1,2-dihexadecanoyl-sn-glycero-3-phosphocholine + H2O = hexadecanoyl-sn-glycero-3-phosphocholine + hexadecanoate + H(+). The catalysed reaction is 1,2-di-(9Z-octadecenoyl)-sn-glycerol + H2O = 2-(9Z-octadecenoyl)-glycerol + (9Z)-octadecenoate + H(+). The enzyme catalyses 1,2,3-tri-(9Z-octadecenoyl)-glycerol + H2O = 2,3-di-(9Z)-octadecenoyl-sn-glycerol + (9Z)-octadecenoate + H(+). It carries out the reaction 1-(9Z-octadecenoyl)-sn-glycero-3-phospho-L-serine + H2O = sn-glycero-3-phospho-L-serine + (9Z)-octadecenoate + H(+). It catalyses the reaction 1-hexadecanoyl-sn-glycero-3-phosphocholine + H2O = sn-glycerol 3-phosphocholine + hexadecanoate + H(+). The catalysed reaction is 1,3-di-(9Z-octadecenoyl)-glycerol + H2O = 3-(9Z-octadecenoyl)-sn-glycerol + (9Z)-octadecenoate + H(+). Its function is as follows. Catalyzes the hydrolysis of triglycerides and phospholipids present in circulating plasma lipoproteins, including chylomicrons, intermediate density lipoproteins (IDL), low density lipoproteins (LDL) of large size and high density lipoproteins (HDL), releasing free fatty acids (FFA) and smaller lipoprotein particles. Also exhibits lysophospholipase activity. Can hydrolyze both neutral lipid and phospholipid substrates but shows a greater binding affinity for neutral lipid substrates than phospholipid substrates. In native LDL, preferentially hydrolyzes the phosphatidylcholine species containing polyunsaturated fatty acids at sn-2 position. The protein is Hepatic triacylglycerol lipase (Lipc) of Mus musculus (Mouse).